Here is a 195-residue protein sequence, read N- to C-terminus: Glycerol-3-phosphate acyltransferase (195 aa).

The next 5 helical transmembrane spans lie at 3–23 (FQVV…GFIL), 52–72 (LALL…AIAQ), 80–100 (ILFL…YLFF), 113–133 (LIFI…ICFL), and 147–167 (LIAL…IFAI).

It belongs to the PlsY family. Probably interacts with PlsX.

It is found in the cell inner membrane. It catalyses the reaction an acyl phosphate + sn-glycerol 3-phosphate = a 1-acyl-sn-glycero-3-phosphate + phosphate. Its pathway is lipid metabolism; phospholipid metabolism. Catalyzes the transfer of an acyl group from acyl-phosphate (acyl-PO(4)) to glycerol-3-phosphate (G3P) to form lysophosphatidic acid (LPA). This enzyme utilizes acyl-phosphate as fatty acyl donor, but not acyl-CoA or acyl-ACP. The chain is Glycerol-3-phosphate acyltransferase from Ehrlichia ruminantium (strain Gardel).